A 596-amino-acid chain; its full sequence is Arginine--tRNA ligase (596 aa).

A 'HIGH' region motif is present at residues 123-133; it reads PNTNKPLHLGH.

The protein belongs to the class-I aminoacyl-tRNA synthetase family. As to quaternary structure, monomer.

Its subcellular location is the cytoplasm. It carries out the reaction tRNA(Arg) + L-arginine + ATP = L-arginyl-tRNA(Arg) + AMP + diphosphate. The polypeptide is Arginine--tRNA ligase (Amoebophilus asiaticus (strain 5a2)).